The primary structure comprises 168 residues: uncharacterized protein (168 aa).

Positions 7–168 (ERIDTLKTGD…TAKGWPDISM (162 aa)) constitute an N-acetyltransferase domain.

This is an uncharacterized protein from Azospirillum brasilense.